An 852-amino-acid chain; its full sequence is Homeobox-leucine zipper protein ATHB-14 (852 aa).

The tract at residues 1–25 is disordered; the sequence is MMMVHSMSRDMMNRESPDKGLDSGK. Positions 7–22 are enriched in basic and acidic residues; the sequence is MSRDMMNRESPDKGLD. Positions 22–85 form a DNA-binding region, homeobox; that stretch reads DSGKYVRYTP…NRRCREKQRK (64 aa). Residues 80-122 are a coiled coil; that stretch reads REKQRKEAARLQTVNRKLNAMNKLLMEENDRLQKQVSNLVYEN. Residues 80-130 form a ZIP domain region; it reads REKQRKEAARLQTVNRKLNAMNKLLMEENDRLQKQVSNLVYENGHMKHQLH. The span at 130–148 shows a compositional bias: polar residues; that stretch reads HTASGTTTDNSCESVVVSG. Residues 130–166 are disordered; sequence HTASGTTTDNSCESVVVSGQQHQQQNPNPQHQQRDAN. Low complexity predominate over residues 149–160; sequence QQHQQQNPNPQH. An START domain is found at 164-392; that stretch reads DANNPAGLLS…IAQETSGEVQ (229 aa).

The protein belongs to the HD-ZIP homeobox family. Class III subfamily. Homodimer. Heterodimer with ZPR3. Interacts with ESR1 and ESR2. Interacts with ZPR3. In terms of tissue distribution, expressed in the center of the meristem and on the adaxial side of the leaves.

It localises to the nucleus. With respect to regulation, inhibited by ZPR3. In terms of biological role, probable transcription factor involved in the determination of adaxial-abaxial polarity in ovule primordium. Specifies adaxial leaf fates. The protein is Homeobox-leucine zipper protein ATHB-14 (ATHB-14) of Arabidopsis thaliana (Mouse-ear cress).